A 95-amino-acid chain; its full sequence is Large ribosomal subunit protein uL23 (95 aa).

Belongs to the universal ribosomal protein uL23 family. In terms of assembly, part of the 50S ribosomal subunit. Contacts protein L29, and trigger factor when it is bound to the ribosome.

In terms of biological role, one of the early assembly proteins it binds 23S rRNA. One of the proteins that surrounds the polypeptide exit tunnel on the outside of the ribosome. Forms the main docking site for trigger factor binding to the ribosome. The sequence is that of Large ribosomal subunit protein uL23 from Desulforudis audaxviator (strain MP104C).